A 178-amino-acid chain; its full sequence is Aspartate carbamoyltransferase regulatory chain (178 aa).

Residues 1 to 15 (MNDREPNQKESKESV) show a composition bias toward basic and acidic residues. The tract at residues 1–23 (MNDREPNQKESKESVNDAVPRAR) is disordered. C133, C138, C159, and C162 together coordinate Zn(2+).

Belongs to the PyrI family. As to quaternary structure, contains catalytic and regulatory chains. Zn(2+) serves as cofactor.

Its function is as follows. Involved in allosteric regulation of aspartate carbamoyltransferase. The sequence is that of Aspartate carbamoyltransferase regulatory chain from Haloquadratum walsbyi (strain DSM 16790 / HBSQ001).